The following is a 282-amino-acid chain: U1 small nuclear ribonucleoprotein A (282 aa).

2 RRM domains span residues 10–89 (NTIY…YSKT) and 208–282 (HILF…FAKK).

It belongs to the RRM U1 A/B'' family. As to quaternary structure, U1 snRNP is composed of the 7 core Sm proteins snrpb, snrpd1, snrpd2, snrpd3, snrpe, snrpf and snrpg that assemble in a heptameric protein ring on the Sm site of the small nuclear RNA to form the core snRNP, and at least three U1 snRNP-specific proteins snrnp70/U1-70K, snrpa/U1-A and snrpc/U1-C.

It is found in the nucleus. Component of the spliceosomal U1 snRNP, which is essential for recognition of the pre-mRNA 5' splice-site and the subsequent assembly of the spliceosome. U1 snRNP is the first snRNP to interact with pre-mRNA. This interaction is required for the subsequent binding of U2 snRNP and the U4/U6/U5 tri-snRNP. Snrpa binds stem loop II of U1 snRNA. In Xenopus laevis (African clawed frog), this protein is U1 small nuclear ribonucleoprotein A (snrpa).